Consider the following 258-residue polypeptide: Ciliogenesis and planar polarity effector 2 (258 aa).

The tract at residues 50 to 258 is small GTPase-like; it reads SIDTASYKIF…LPNPPESAPE (209 aa). GTP contacts are provided by Ser64, Gly65, Gly67, Lys68, Thr69, Ala70, Val82, His84, Thr87, Lys176, Asp178, and Ser206.

The protein belongs to the small GTPase superfamily. Rab family. In terms of assembly, interacts with FUZ. Associates with the CPLANE (ciliogenesis and planar polarity effectors) complex via its interaction with FUZ.

Its subcellular location is the cytoplasm. It is found in the cytoskeleton. It localises to the cilium basal body. The protein resides in the microtubule organizing center. The protein localises to the centrosome. Its subcellular location is the centriole. In terms of biological role, required for efficient primary cilia initiation, regulating a late step in cilia initiation. Plays a role in the final maturation of the mother centriole and ciliary vesicle that allows extension of the ciliary axoneme. The sequence is that of Ciliogenesis and planar polarity effector 2 from Homo sapiens (Human).